Consider the following 436-residue polypeptide: Glutamyl-tRNA reductase (436 aa).

Substrate-binding positions include 49–52, Ser109, 114–116, and Gln120; these read TCNR and EGQ. Cys50 serves as the catalytic Nucleophile. 198–203 serves as a coordination point for NADP(+); it reads GAGRMS.

The protein belongs to the glutamyl-tRNA reductase family. As to quaternary structure, homodimer.

The enzyme catalyses (S)-4-amino-5-oxopentanoate + tRNA(Glu) + NADP(+) = L-glutamyl-tRNA(Glu) + NADPH + H(+). It participates in porphyrin-containing compound metabolism; protoporphyrin-IX biosynthesis; 5-aminolevulinate from L-glutamyl-tRNA(Glu): step 1/2. It functions in the pathway porphyrin-containing compound metabolism; chlorophyll biosynthesis. Its function is as follows. Catalyzes the NADPH-dependent reduction of glutamyl-tRNA(Glu) to glutamate 1-semialdehyde (GSA). The polypeptide is Glutamyl-tRNA reductase (Prochlorococcus marinus (strain MIT 9303)).